The primary structure comprises 168 residues: Transcription antitermination protein NusB (168 aa).

It belongs to the NusB family.

In terms of biological role, involved in transcription antitermination. Required for transcription of ribosomal RNA (rRNA) genes. Binds specifically to the boxA antiterminator sequence of the ribosomal RNA (rrn) operons. This Chlamydia trachomatis serovar L2 (strain ATCC VR-902B / DSM 19102 / 434/Bu) protein is Transcription antitermination protein NusB.